The following is a 90-amino-acid chain: Probable Fe(2+)-trafficking protein (90 aa).

Belongs to the Fe(2+)-trafficking protein family. As to quaternary structure, monomer.

Its function is as follows. Could be a mediator in iron transactions between iron acquisition and iron-requiring processes, such as synthesis and/or repair of Fe-S clusters in biosynthetic enzymes. The sequence is that of Probable Fe(2+)-trafficking protein from Pectobacterium atrosepticum (strain SCRI 1043 / ATCC BAA-672) (Erwinia carotovora subsp. atroseptica).